Consider the following 37-residue polypeptide: Large ribosomal subunit protein bL36 (37 aa).

It belongs to the bacterial ribosomal protein bL36 family.

In Marinobacter nauticus (strain ATCC 700491 / DSM 11845 / VT8) (Marinobacter aquaeolei), this protein is Large ribosomal subunit protein bL36.